Consider the following 282-residue polypeptide: Glycine betaine transport system permease protein OpuAB (282 aa).

Residues 1-18 (MDRLPRIPLADIIDRFVD) are Extracellular-facing. The helical transmembrane segment at 19-39 (WITMTFGGFFDGIANGLAAFV) threads the bilayer. The Cytoplasmic portion of the chain corresponds to 40–44 (NGIVT). The helical transmembrane segment at 45–65 (GLGFIPSILLTIIFAALAWWI) threads the bilayer. Topologically, residues 66 to 69 (STRG) are extracellular. A helical membrane pass occupies residues 70-90 (IALFTLIGFLLIDYLGYWDPM). The ABC transmembrane type-1 domain occupies 90 to 269 (MLQTLALVLT…IVAITLDRIT (180 aa)). At 91-93 (LQT) the chain is on the cytoplasmic side. The helical transmembrane segment at 94–114 (LALVLTSVIISIVVGVPIGIW) threads the bilayer. Residues 115–137 (ASQKETVRRIVTPILDLMQTMPA) lie on the Extracellular side of the membrane. Residues 138–158 (FVYLLPAIFFFNIGVVPGVVA) traverse the membrane as a helical segment. The Cytoplasmic portion of the chain corresponds to 159–215 (SVIFAMPPTIRMTVLGIKQVPADLIEATEAFGSTTAQRLFKVQLPLATKTILAGINQ). The chain crosses the membrane as a helical span at residues 216-236 (SIMLALSMVVIAAMVGAPGLG). The Extracellular segment spans residues 237–242 (SEVYSA). A helical membrane pass occupies residues 243 to 263 (VTQLKTGVGVEAGIAIVIVAI). The Cytoplasmic portion of the chain corresponds to 264 to 282 (TLDRITQNIKVKKKSRGNA).

It belongs to the binding-protein-dependent transport system permease family. CysTW subfamily. In terms of assembly, the complex is composed of two ATP-binding proteins (OpuAA), two transmembrane proteins (OpuAB) and a solute-binding protein (OpuAC).

The protein resides in the cell membrane. Its function is as follows. Involved in a multicomponent binding-protein-dependent transport system for glycine betaine; probably responsible for the translocation of the substrate across the membrane. This Bacillus subtilis (strain 168) protein is Glycine betaine transport system permease protein OpuAB (opuAB).